A 289-amino-acid chain; its full sequence is Aquaporin PIP2-3 (289 aa).

The segment at 1–25 (MAKQDIEASGPEAGEFSAKDYTDPP) is disordered. 2 helical membrane passes run 43 to 63 (AVIA…ATVI) and 80 to 100 (CGGV…FILV). The NPA 1 motif lies at 112 to 114 (NPA). The next 3 membrane-spanning stretches (helical) occupy residues 131–151 (LLYI…VKGF), 173–193 (GTGL…VFSA), and 207–227 (VLAP…TIPI). Positions 233 to 235 (NPA) match the NPA 2 motif. The helical transmembrane segment at 255 to 275 (IFWVGPLIGAAIAAAYHQYVL) threads the bilayer.

This sequence belongs to the MIP/aquaporin (TC 1.A.8) family. PIP (TC 1.A.8.11) subfamily.

It localises to the cell membrane. Its function is as follows. Aquaporins facilitate the transport of water and small neutral solutes across cell membranes. The sequence is that of Aquaporin PIP2-3 (PIP2-3) from Zea mays (Maize).